Consider the following 360-residue polypeptide: DNA polymerase IV (360 aa).

The UmuC domain occupies 8 to 191 (VLHVDMDSFF…LPVGRIPGIG (184 aa)). Mg(2+) is bound by residues Asp12 and Asp110. The active site involves Glu111.

This sequence belongs to the DNA polymerase type-Y family. Monomer. The cofactor is Mg(2+).

It is found in the cytoplasm. The enzyme catalyses DNA(n) + a 2'-deoxyribonucleoside 5'-triphosphate = DNA(n+1) + diphosphate. In terms of biological role, poorly processive, error-prone DNA polymerase involved in untargeted mutagenesis. Copies undamaged DNA at stalled replication forks, which arise in vivo from mismatched or misaligned primer ends. These misaligned primers can be extended by PolIV. Exhibits no 3'-5' exonuclease (proofreading) activity. May be involved in translesional synthesis. In Methanoculleus marisnigri (strain ATCC 35101 / DSM 1498 / JR1), this protein is DNA polymerase IV.